A 509-amino-acid polypeptide reads, in one-letter code: SH2 domain-containing adapter protein B (509 aa).

Disordered stretches follow at residues 1–103 and 144–178; these read MAKW…GSSL and SGAG…EVRY. A mediates interaction with LAT, PTK2/FAK1, JAK1 and JAK3 region spans residues 1–410; sequence MAKWLNKYFS…PAVPLEKQIW (410 aa). Residues 44 to 61 show a composition bias toward low complexity; the sequence is VPQASSAASASCGPATAS. Residues 62-79 show a composition bias toward polar residues; it reads CFSASSGSLPDDSGSTSD. The residue at position 102 (Ser102) is a Phosphoserine. Over residues 144–158 the composition is skewed to low complexity; that stretch reads SGAGAAASSSSSSGS. Lys187 participates in a covalent cross-link: Glycyl lysine isopeptide (Lys-Gly) (interchain with G-Cter in SUMO2). The disordered stretch occupies residues 229-385; that stretch reads AEESGAGKKD…APGGGFKPIK (157 aa). 2 stretches are compositionally biased toward basic and acidic residues: residues 233–242 and 250–262; these read GAGKKDKVTI and FDAK…KAGK. 2 positions are modified to phosphoserine: Ser307 and Ser317. The span at 307–317 shows a compositional bias: polar residues; that stretch reads SVDSDSESTVS. Residues 319–334 are compositionally biased toward basic and acidic residues; it reads RLRESKLPQDDDRPAD. Phosphoserine is present on Ser388. Positions 410–504 constitute an SH2 domain; the sequence is WYHGAISRGD…AEHLSLLYPV (95 aa).

As to quaternary structure, interacts with PTPN11. Interacts with phosphorylated 'Tyr-720' of the ligand-activated receptor PDGFRA via its SH2 domain. Interacts with the ligand-activated receptors PDGFRB, FGFR1, KDR/VEGFR2, IL2RB and IL2RG. Interacts with EPS8 and V-SRC. Interacts with GRB2 and GRAP. Interacts with CD3Z. Interacts with tyrosine-phosphorylated LAT upon T-cell antigen receptor activation. Interacts with PLCG1. Interacts with ZAP70, LCP2/SLP-76, VAV1 and GRAP2. Interacts with JAK1 and JAK3. Interacts with PTK2/FAK1. Interacts with CRK/CrKII. Interacts with IRS2. Post-translationally, phosphorylated upon PDGFRA, PDGFRB, TCR, IL2 receptor, FGFR1 or VEGFR2 activation. In terms of tissue distribution, widely expressed.

Its subcellular location is the cytoplasm. It is found in the cell membrane. In terms of biological role, adapter protein which regulates several signal transduction cascades by linking activated receptors to downstream signaling components. May play a role in angiogenesis by regulating FGFR1, VEGFR2 and PDGFR signaling. May also play a role in T-cell antigen receptor/TCR signaling, interleukin-2 signaling, apoptosis and neuronal cells differentiation by mediating basic-FGF and NGF-induced signaling cascades. May also regulate IRS1 and IRS2 signaling in insulin-producing cells. This Homo sapiens (Human) protein is SH2 domain-containing adapter protein B (SHB).